Consider the following 654-residue polypeptide: DNA ligase (654 aa).

NAD(+)-binding positions include 34–38 (DLEYD), 83–84 (SL), and E114. The active-site N6-AMP-lysine intermediate is the K116. Residues R137, E171, K280, and K304 each coordinate NAD(+). Residues C396, C399, C414, and C419 each coordinate Zn(2+). The region spanning 577–654 (VISTILSGYT…EEQFYDLIKQ (78 aa)) is the BRCT domain.

It belongs to the NAD-dependent DNA ligase family. LigA subfamily. Mg(2+) serves as cofactor. Requires Mn(2+) as cofactor.

The catalysed reaction is NAD(+) + (deoxyribonucleotide)n-3'-hydroxyl + 5'-phospho-(deoxyribonucleotide)m = (deoxyribonucleotide)n+m + AMP + beta-nicotinamide D-nucleotide.. Its function is as follows. DNA ligase that catalyzes the formation of phosphodiester linkages between 5'-phosphoryl and 3'-hydroxyl groups in double-stranded DNA using NAD as a coenzyme and as the energy source for the reaction. It is essential for DNA replication and repair of damaged DNA. The sequence is that of DNA ligase from Mycoplasmopsis agalactiae (strain NCTC 10123 / CIP 59.7 / PG2) (Mycoplasma agalactiae).